The sequence spans 420 residues: Disease resistance protein CHS1 (420 aa).

The TIR domain occupies 12 to 167; sequence RELDVFLSFS…QIADDIRLMF (156 aa). Glu86 is a catalytic residue. The NB-ARC domain occupies 185-406; that stretch reads MKALYALLAL…KDIKEVWKIM (222 aa).

As to expression, mostly expressed in leaves and flowers (mainly in sepals), and, at a lower intensity, in stems. Present at low levels in roots and seeds.

It localises to the cytoplasm. The protein resides in the nucleus. The catalysed reaction is NAD(+) + H2O = ADP-D-ribose + nicotinamide + H(+). Confers resistance to low temperatures by limiting chloroplast damage and cell death, thus maintaining growth homeostasis. Regulates steryl-esters and sterols accumulation. Limits leaf necrosis associated with virulent bacterial infection (e.g. Pseudomonas syringae pv. tomato DC3000). The sequence is that of Disease resistance protein CHS1 from Arabidopsis thaliana (Mouse-ear cress).